The chain runs to 833 residues: DNA ligase (833 aa).

NAD(+) is bound by residues 35-39 (DADYD), 84-85 (SL), and glutamate 115. Lysine 117 (N6-AMP-lysine intermediate) is an active-site residue. NAD(+) contacts are provided by arginine 138, glutamate 175, lysine 292, and lysine 316. Cysteine 410, cysteine 413, cysteine 428, and cysteine 434 together coordinate Zn(2+). The 84-residue stretch at 750–833 (EKTGPLDGQT…AFLGDHGQQP (84 aa)) folds into the BRCT domain.

It belongs to the NAD-dependent DNA ligase family. LigA subfamily. The cofactor is Mg(2+). Mn(2+) serves as cofactor.

It carries out the reaction NAD(+) + (deoxyribonucleotide)n-3'-hydroxyl + 5'-phospho-(deoxyribonucleotide)m = (deoxyribonucleotide)n+m + AMP + beta-nicotinamide D-nucleotide.. Its function is as follows. DNA ligase that catalyzes the formation of phosphodiester linkages between 5'-phosphoryl and 3'-hydroxyl groups in double-stranded DNA using NAD as a coenzyme and as the energy source for the reaction. It is essential for DNA replication and repair of damaged DNA. The polypeptide is DNA ligase (Xanthomonas axonopodis pv. citri (strain 306)).